A 371-amino-acid polypeptide reads, in one-letter code: Leu/Ile/Val-binding protein homolog 2 (371 aa).

An N-terminal signal peptide occupies residues 1-23; it reads MKKSLFCGVCLCALVAMGGTSFA.

This sequence belongs to the leucine-binding protein family.

Component of an amino-acid transport system. In Brucella abortus (strain 2308), this protein is Leu/Ile/Val-binding protein homolog 2.